The following is a 547-amino-acid chain: Chaperonin GroEL 3 (547 aa).

ATP contacts are provided by residues 30 to 33 (TLGP), lysine 51, 87 to 91 (DGTTT), glycine 415, and aspartate 496.

Belongs to the chaperonin (HSP60) family. Forms a cylinder of 14 subunits composed of two heptameric rings stacked back-to-back. Interacts with the co-chaperonin GroES.

The protein resides in the cytoplasm. The enzyme catalyses ATP + H2O + a folded polypeptide = ADP + phosphate + an unfolded polypeptide.. Together with its co-chaperonin GroES, plays an essential role in assisting protein folding. The GroEL-GroES system forms a nano-cage that allows encapsulation of the non-native substrate proteins and provides a physical environment optimized to promote and accelerate protein folding. The protein is Chaperonin GroEL 3 of Bradyrhizobium sp. (strain ORS 278).